The chain runs to 389 residues: Phosphatidylglycerol--prolipoprotein diacylglyceryl transferase (389 aa).

A run of 4 helical transmembrane segments spans residues 28–48 (IIVAIGIAFGILMFVLKLIYF), 58–78 (FFIFIAVLTMVLGARAWYFLI), 98–118 (LAIQGGVLLTTLAGIIYFNVF), and 148–168 (ISVFVMLDLIAPCVLIGQAIG). Arginine 169 contacts a 1,2-diacyl-sn-glycero-3-phospho-(1'-sn-glycerol). 3 helical membrane-spanning segments follow: residues 220-240 (IPLFLIESFFNTIFFVFIYFV), 281-301 (IVFSALLILVGIVGIIYCQTL), and 309-329 (FWTYFFLYGWYKVAAFFTTLF).

It belongs to the Lgt family.

The protein localises to the cell membrane. It carries out the reaction L-cysteinyl-[prolipoprotein] + a 1,2-diacyl-sn-glycero-3-phospho-(1'-sn-glycerol) = an S-1,2-diacyl-sn-glyceryl-L-cysteinyl-[prolipoprotein] + sn-glycerol 1-phosphate + H(+). It functions in the pathway protein modification; lipoprotein biosynthesis (diacylglyceryl transfer). Functionally, catalyzes the transfer of the diacylglyceryl group from phosphatidylglycerol to the sulfhydryl group of the N-terminal cysteine of a prolipoprotein, the first step in the formation of mature lipoproteins. The polypeptide is Phosphatidylglycerol--prolipoprotein diacylglyceryl transferase (Mycoplasma pneumoniae (strain ATCC 29342 / M129 / Subtype 1) (Mycoplasmoides pneumoniae)).